The sequence spans 376 residues: Glutamate 5-kinase (376 aa).

Lysine 18 provides a ligand contact to ATP. Serine 58, aspartate 145, and asparagine 157 together coordinate substrate. ATP contacts are provided by residues 177–178 (SD) and 218–224 (TGGMASK). The region spanning 280–358 (TGALTLDAGA…SELPGELRRP (79 aa)) is the PUA domain.

It belongs to the glutamate 5-kinase family.

The protein resides in the cytoplasm. The enzyme catalyses L-glutamate + ATP = L-glutamyl 5-phosphate + ADP. It participates in amino-acid biosynthesis; L-proline biosynthesis; L-glutamate 5-semialdehyde from L-glutamate: step 1/2. In terms of biological role, catalyzes the transfer of a phosphate group to glutamate to form L-glutamate 5-phosphate. The chain is Glutamate 5-kinase from Mycobacterium tuberculosis (strain CDC 1551 / Oshkosh).